Here is a 116-residue protein sequence, read N- to C-terminus: Cuticle protein AM1274 (116 aa).

Gln-1 carries the pyrrolidone carboxylic acid modification. The interval 1-22 is disordered; it reads QLANEPPIEIIRQESTDNGDGN. The Chitin-binding type R&amp;R domain occupies 20-85; it reads DGNFNFLFET…PVSDFIPTPH (66 aa). A glycan (O-linked (HexNAc) threonine) is linked at Thr-83.

As to expression, arthrodial membrane.

The sequence is that of Cuticle protein AM1274 from Cancer pagurus (Rock crab).